Reading from the N-terminus, the 366-residue chain is uncharacterized protein (366 aa).

6 helical membrane-spanning segments follow: residues Phe-30–Ile-50, Ile-66–Ile-86, Ile-136–Ala-156, Ile-162–Leu-182, Ile-198–Ile-218, and Tyr-225–Val-245.

The protein localises to the cell membrane. This is an uncharacterized protein from Methanocaldococcus jannaschii (strain ATCC 43067 / DSM 2661 / JAL-1 / JCM 10045 / NBRC 100440) (Methanococcus jannaschii).